We begin with the raw amino-acid sequence, 326 residues long: Virulence-associated V antigen (326 aa).

It localises to the secreted. Functionally, possibly involved in calcium regulation of YOP expression, which includes the export process. This Yersinia pestis protein is Virulence-associated V antigen (lcrV).